We begin with the raw amino-acid sequence, 90 residues long: DNA-binding protein HU-1 (90 aa).

At Thr4 the chain carries Phosphothreonine. The segment at 55–90 (RSARKGRNPQTGEEIEIPATKNPAFKPGKQLKDAVN) is disordered.

It belongs to the bacterial histone-like protein family. Homodimer.

Histone-like DNA-binding protein which is capable of wrapping DNA to stabilize it, and thus to prevent its denaturation under extreme environmental conditions. This is DNA-binding protein HU-1 (hup1) from Halalkalibacterium halodurans (strain ATCC BAA-125 / DSM 18197 / FERM 7344 / JCM 9153 / C-125) (Bacillus halodurans).